We begin with the raw amino-acid sequence, 504 residues long: MNLFSALSLDTLVLLAIILVLLYRYGTCTHGLFKKQGIPGPKPLPFLGTVLNYYKGLWKFDMECYEKYGKTWGLFDGQIPLFVITDPETIKNVLVKECFSVFTNRQDFFPVGIMSKSISLAKDEEWKRYRALLSPTFTSGNLKEMFPVIEQYGDILVKYLRQEAEKGKPVAVKDVLGAYSMDVIISTTFGVNIDSLNNPEDPFVENAKKVLRFDYFDPLSLSVALFPFLTPIYEMLNICMFPKDSIEFFKKFVDRMTENRLDSKQKHRVDFIYLMMEAYNKSKDKDSHKALSEIEITAQSIIFIFAGYETTSSILSFTVYSLATHPDIQKKLQEEIDEALPNKAPPTYDTVMAMEYLDMVLNETLRLYPITNRLQRVCKKDVEINGIYIPKGSTVIIPSYVLHHDPQHWPEPEEFQPERFSKENKGSIDPYVYLPFGNGPRNCIGMRFALMNMKLALIKVLQNFSFQPCKETQIPLKLSRELLLQPVKPIVLKVVPRDAVITGA.

Position 443 (Cys-443) interacts with heme.

The protein belongs to the cytochrome P450 family. Heme serves as cofactor.

The protein localises to the endoplasmic reticulum membrane. Its subcellular location is the microsome membrane. The enzyme catalyses an organic molecule + reduced [NADPH--hemoprotein reductase] + O2 = an alcohol + oxidized [NADPH--hemoprotein reductase] + H2O + H(+). Functionally, cytochromes P450 are a group of heme-thiolate monooxygenases. In liver microsomes, this enzyme is involved in an NADPH-dependent electron transport pathway. It oxidizes a variety of structurally unrelated compounds, including steroids, fatty acids, and xenobiotics. This chain is Cytochrome P450 3A16 (Cyp3a16), found in Mus musculus (Mouse).